A 702-amino-acid polypeptide reads, in one-letter code: Serotransferrin-A (702 aa).

Positions methionine 1–alanine 19 are cleaved as a signal peptide. 2 consecutive Transferrin-like domains span residues valine 26–glutamate 340 and valine 353–lysine 685. Intrachain disulfides connect cysteine 29/cysteine 64 and cysteine 39/cysteine 55. Fe(3+) is bound by residues aspartate 79 and tyrosine 111. 3 disulfides stabilise this stretch: cysteine 134/cysteine 217, cysteine 179/cysteine 192, and cysteine 245/cysteine 259. Hydrogencarbonate contacts are provided by threonine 136, lysine 140, alanine 142, and glycine 143. Tyrosine 211 is a binding site for Fe(3+). Position 267 (histidine 267) interacts with Fe(3+). The tract at residues glutamate 340–alanine 349 is connecting region. Disulfide bonds link cysteine 356–cysteine 388 and cysteine 366–cysteine 379. Fe(3+)-binding residues include aspartate 403 and tyrosine 442. Disulfide bonds link cysteine 413–cysteine 697, cysteine 431–cysteine 658, cysteine 465–cysteine 544, cysteine 489–cysteine 686, cysteine 499–cysteine 513, cysteine 510–cysteine 527, and cysteine 584–cysteine 598. The hydrogencarbonate site is built by threonine 467, arginine 471, alanine 473, and glycine 474. Tyrosine 538 contacts Fe(3+). Histidine 606 contacts Fe(3+).

The protein belongs to the transferrin family. Monomer. As to expression, plasma.

The protein resides in the secreted. Transferrins are iron binding transport proteins which can bind two Fe(3+) ions in association with the binding of an anion, usually bicarbonate. It is responsible for the transport of iron from sites of absorption and heme degradation to those of storage and utilization. Serum transferrin may also have a further role in stimulating cell proliferation. This Xenopus laevis (African clawed frog) protein is Serotransferrin-A (tf-a).